Consider the following 274-residue polypeptide: MPFRSNNPLTRDELLSRFFPQFHPVTTFNSGLSGGSFLIEHQGQRFVVRQPHDPDAPQSAFLRQYRALSQLPACIAPKPHLYLRDWMVVDYLPGEVKTYLPDTNELAGLLYYLHQQPRFGWRITLLPLLELYWQQSDPARRTVGWLRMLKRLRKAREPRLLRLSPLHMDVHAGNLVHSAPGLKLIDWEYAGDGDIALELAAVWVENTDQHRQLVNDYATRAKIYPAQLWRQVRRWFPWLLMLKAGWFEYRWRQTGDQQFIRLADDTWRQLLIKQ.

Belongs to the thiamine kinase family.

The enzyme catalyses thiamine + ATP = thiamine phosphate + ADP + H(+). It functions in the pathway cofactor biosynthesis; thiamine diphosphate biosynthesis; thiamine phosphate from thiamine: step 1/1. In terms of biological role, catalyzes the ATP-dependent phosphorylation of thiamine to thiamine phosphate. Is involved in thiamine salvage. This chain is Thiamine kinase, found in Escherichia coli O81 (strain ED1a).